The following is a 735-amino-acid chain: Wall-associated receptor kinase 1 (735 aa).

The first 24 residues, 1–24 (MKVQEGLFLVAIFFSLACTQLVKG), serve as a signal peptide directing secretion. The Extracellular portion of the chain corresponds to 25–331 (QHQPGENCQN…TTTMSCKRKE (307 aa)). Residues N38, N56, N80, N90, N113, N140, N209, N235, and N250 are each glycosylated (N-linked (GlcNAc...) asparagine). A polygalacturonic acid-binding region spans residues 67–254 (RPHVLSDIEV…SICGGNSTCL (188 aa)). Residues 234-281 (GNQTCEQVGSTSICGGNSTCLDSTPRNGYICRCNEGFDGNPYLSAGCQ) form the EGF-like 1 domain. Cystine bridges form between C238–C253, C247–C264, C266–C280, C286–C303, C297–C312, and C314–C327. In terms of domain architecture, EGF-like 2; calcium-binding spans 282 to 328 (DVNECTTSSTIHRHNCSDPKTCRNKVGGFYCKCQSGYRLDTTTMSCK). The N-linked (GlcNAc...) asparagine glycan is linked to N296. The helical transmembrane segment at 332 to 352 (FAWTTILLVTTIGFLVILLGV) threads the bilayer. At 353–735 (ACIQQRMKHL…VAILDIETGR (383 aa)) the chain is on the cytoplasmic side. T398 is modified (phosphothreonine). Residues 409-692 (YAESRILGQG…RVEKTKHKWS (284 aa)) form the Protein kinase domain. Residues 415–423 (LGQGGQGTV) and K437 each bind ATP. At Y482 the chain carries Phosphotyrosine. D534 acts as the Proton acceptor in catalysis. Phosphothreonine is present on residues T568 and T573. At Y581 the chain carries Phosphotyrosine.

This sequence belongs to the protein kinase superfamily. Ser/Thr protein kinase family. Interacts with the glycine-rich proteins GRP3 and GRP3S, and the type 2C protein phosphatase KAPP. Component of a 500 kDa complex, composed of WAK1, GRP3 and KAPP. Interacts with the oxygen-evolving enhancer protein 2 (OEE2). Predominantly expressed in green tissues such as stems and leaves. Detected at organ junctions.

The protein localises to the membrane. It carries out the reaction L-seryl-[protein] + ATP = O-phospho-L-seryl-[protein] + ADP + H(+). It catalyses the reaction L-threonyl-[protein] + ATP = O-phospho-L-threonyl-[protein] + ADP + H(+). In terms of biological role, serine/threonine-protein kinase that may function as a signaling receptor of extracellular matrix component. Binding to pectin may have significance in the control of cell expansion, morphogenesis and development. Required during plant's response to pathogen infection and in plant defense against heavy metal toxicity. Phosphorylates the oxygen-evolving enhancer protein 2 (OEE2) in an GRP-3-dependent manner. This Arabidopsis thaliana (Mouse-ear cress) protein is Wall-associated receptor kinase 1 (WAK1).